Reading from the N-terminus, the 463-residue chain is MSVLIVGMSHRSAPVSLLERLSMDDSVRGETTQALLGRASLSEALIVSTCNRLEVYTVTSSFHTGVNDVVEVLHEASGVDIETLRGYLYVRYADAAAEHMLVVTSGLDSMVLGEQQIIGQVRTAYQAANEYGSVGPALHSLTQTALHTGKRVHSETAIDDAGASMVSFAVDRALVQMGLDSEAEAPLSGKTALVLGAGAMSSLAATHLGRAGISKLIMANRTLERAERLAEHSLEAGVPAEVVEYDQRASAYNRVDLVVSATGADDFTVKPEDIPEGASLMLVDLSMPRDIDDACADLPGVDLVNIERLHKASREGGSGMAPSEEEALAIVREELDSFTSEQRIRDIVPAVSALRRQAASVGSDELDRLRQRAPGISEVEWGEVEKTVRRVVDKLLHQPTVRVKELAARSGSISYDSALQELFGLESLASTAAPATTSVNASELPDAGIVAFVNAPSATQTRE.

Residues 49–52 (TCNR), S109, 114–116 (EQQ), and Q120 each bind substrate. C50 (nucleophile) is an active-site residue. Residue 196–201 (GAGAMS) participates in NADP(+) binding.

Belongs to the glutamyl-tRNA reductase family. In terms of assembly, homodimer.

The enzyme catalyses (S)-4-amino-5-oxopentanoate + tRNA(Glu) + NADP(+) = L-glutamyl-tRNA(Glu) + NADPH + H(+). It participates in porphyrin-containing compound metabolism; protoporphyrin-IX biosynthesis; 5-aminolevulinate from L-glutamyl-tRNA(Glu): step 1/2. Catalyzes the NADPH-dependent reduction of glutamyl-tRNA(Glu) to glutamate 1-semialdehyde (GSA). This Corynebacterium glutamicum (strain R) protein is Glutamyl-tRNA reductase.